The chain runs to 262 residues: Acyl-[acyl-carrier-protein]--UDP-N-acetylglucosamine O-acyltransferase (262 aa).

It belongs to the transferase hexapeptide repeat family. LpxA subfamily. In terms of assembly, homotrimer.

The protein localises to the cytoplasm. It catalyses the reaction a (3R)-hydroxyacyl-[ACP] + UDP-N-acetyl-alpha-D-glucosamine = a UDP-3-O-[(3R)-3-hydroxyacyl]-N-acetyl-alpha-D-glucosamine + holo-[ACP]. It functions in the pathway glycolipid biosynthesis; lipid IV(A) biosynthesis; lipid IV(A) from (3R)-3-hydroxytetradecanoyl-[acyl-carrier-protein] and UDP-N-acetyl-alpha-D-glucosamine: step 1/6. Involved in the biosynthesis of lipid A, a phosphorylated glycolipid that anchors the lipopolysaccharide to the outer membrane of the cell. The polypeptide is Acyl-[acyl-carrier-protein]--UDP-N-acetylglucosamine O-acyltransferase (Vibrio campbellii (strain ATCC BAA-1116)).